Here is a 117-residue protein sequence, read N- to C-terminus: Hemerythrin subunit alpha (117 aa).

Fe cation-binding residues include histidine 24, histidine 53, glutamate 57, histidine 72, histidine 76, histidine 105, and aspartate 110.

Belongs to the hemerythrin family. As to quaternary structure, octamer composed of two types of chains: alpha and beta.

Functionally, hemerythrin is a respiratory protein in blood cells of certain marine worms. The oxygen-binding site in each chain contains two iron atoms. The chain is Hemerythrin subunit alpha from Lingula anatina (Brachiopod).